An 84-amino-acid chain; its full sequence is Small ribosomal subunit protein bS20 (84 aa).

The disordered stretch occupies residues 1 to 25 (MANIVSNEKTYRHTQKVRKENHAKM).

Belongs to the bacterial ribosomal protein bS20 family.

Functionally, binds directly to 16S ribosomal RNA. In Ureaplasma parvum serovar 3 (strain ATCC 700970), this protein is Small ribosomal subunit protein bS20.